Consider the following 454-residue polypeptide: uncharacterized protein (454 aa).

The 42-residue stretch at 364–405 (CSRPGCDAPAYHSEVHHVTPWTTTHRTDINDLTLACGPDNRL) folds into the HNH domain. The segment at 415–434 (NAKGDTEWLPPAHLDHGQPR) is disordered.

Belongs to the Rv1128c/1148c/1588c/1702c/1945/3466 family.

This is an uncharacterized protein from Mycobacterium tuberculosis (strain CDC 1551 / Oshkosh).